The chain runs to 236 residues: Glucosamine-6-phosphate deaminase (236 aa).

Asp62 (proton acceptor; for enolization step) is an active-site residue. Asn128 functions as the For ring-opening step in the catalytic mechanism. The active-site Proton acceptor; for ring-opening step is the His130. Catalysis depends on Glu135, which acts as the For ring-opening step.

Belongs to the glucosamine/galactosamine-6-phosphate isomerase family. NagB subfamily.

It catalyses the reaction alpha-D-glucosamine 6-phosphate + H2O = beta-D-fructose 6-phosphate + NH4(+). It participates in amino-sugar metabolism; N-acetylneuraminate degradation; D-fructose 6-phosphate from N-acetylneuraminate: step 5/5. Functionally, catalyzes the reversible isomerization-deamination of glucosamine 6-phosphate (GlcN6P) to form fructose 6-phosphate (Fru6P) and ammonium ion. The polypeptide is Glucosamine-6-phosphate deaminase (Lacticaseibacillus paracasei (strain ATCC 334 / BCRC 17002 / CCUG 31169 / CIP 107868 / KCTC 3260 / NRRL B-441) (Lactobacillus paracasei)).